A 175-amino-acid chain; its full sequence is Ribosome maturation factor RimM (175 aa).

The 74-residue stretch at 97–170 (NGQYYWTDVL…YLYVDWQMAW (74 aa)) folds into the PRC barrel domain.

Belongs to the RimM family. In terms of assembly, binds ribosomal protein uS19.

Its subcellular location is the cytoplasm. Its function is as follows. An accessory protein needed during the final step in the assembly of 30S ribosomal subunit, possibly for assembly of the head region. Essential for efficient processing of 16S rRNA. May be needed both before and after RbfA during the maturation of 16S rRNA. It has affinity for free ribosomal 30S subunits but not for 70S ribosomes. The chain is Ribosome maturation factor RimM from Dichelobacter nodosus (strain VCS1703A).